The sequence spans 400 residues: Subtilisin-like protease 1 (400 aa).

Residues 1-20 (MKFSQSLIALAACFLPLIAA) form the signal peptide. The propeptide occupies 21 to 119 (APVEAQHAKI…IEMDGKVQAN (99 aa)). One can recognise an Inhibitor I9 domain in the interval 42-117 (SYIVVFNKGV…AWIEMDGKVQ (76 aa)). Asn-82 carries an N-linked (GlcNAc...) asparagine glycan. The 273-residue stretch at 128–400 (TWGLGRISHK…NLIAYNGNGA (273 aa)) folds into the Peptidase S8 domain. Residues Asp-160, His-192, and Ser-345 each act as charge relay system in the active site.

Belongs to the peptidase S8 family.

The protein resides in the secreted. Its function is as follows. Major secreted subtilisin-like serine endopeptidase. Mediates the degradation of collagen, the major structural protein in the mammalian host. Degrades the nonhelical regions of collagen that function in the cross-linking of the helical components. May function as virulence factor involved in epidermal wing necrosis observed in white nose syndrome (WNS) in bats. The sequence is that of Subtilisin-like protease 1 from Pseudogymnoascus destructans (strain ATCC MYA-4855 / 20631-21) (Bat white-nose syndrome fungus).